Here is a 280-residue protein sequence, read N- to C-terminus: Cell division control protein 2 homolog B (280 aa).

Residues 1–5 and lysine 20 each bind ATP; that span reads AYGVV. The Protein kinase domain maps to 1-274; sequence AYGVVYKARD…AKKALEHEYF (274 aa). Tyrosine 2 is modified (phosphotyrosine). Aspartate 114 (proton acceptor) is an active-site residue. At threonine 148 the chain carries Phosphothreonine; by CAK.

This sequence belongs to the protein kinase superfamily. CMGC Ser/Thr protein kinase family. CDC2/CDKX subfamily.

It catalyses the reaction L-seryl-[protein] + ATP = O-phospho-L-seryl-[protein] + ADP + H(+). The enzyme catalyses L-threonyl-[protein] + ATP = O-phospho-L-threonyl-[protein] + ADP + H(+). It carries out the reaction [DNA-directed RNA polymerase] + ATP = phospho-[DNA-directed RNA polymerase] + ADP + H(+). Phosphorylation at Tyr-2 inactivates the enzyme, while phosphorylation at Thr-148 activates it. Plays a key role in the control of the eukaryotic cell cycle. This chain is Cell division control protein 2 homolog B (CDC2B), found in Antirrhinum majus (Garden snapdragon).